A 131-amino-acid polypeptide reads, in one-letter code: Small ribosomal subunit protein uS11 (131 aa).

Belongs to the universal ribosomal protein uS11 family. As to quaternary structure, part of the 30S ribosomal subunit. Interacts with proteins S7 and S18. Binds to IF-3.

Its function is as follows. Located on the platform of the 30S subunit, it bridges several disparate RNA helices of the 16S rRNA. Forms part of the Shine-Dalgarno cleft in the 70S ribosome. In Bacillus licheniformis (strain ATCC 14580 / DSM 13 / JCM 2505 / CCUG 7422 / NBRC 12200 / NCIMB 9375 / NCTC 10341 / NRRL NRS-1264 / Gibson 46), this protein is Small ribosomal subunit protein uS11.